The chain runs to 571 residues: Proline--tRNA ligase (571 aa).

It belongs to the class-II aminoacyl-tRNA synthetase family. ProS type 1 subfamily. In terms of assembly, homodimer.

The protein localises to the cytoplasm. It catalyses the reaction tRNA(Pro) + L-proline + ATP = L-prolyl-tRNA(Pro) + AMP + diphosphate. Catalyzes the attachment of proline to tRNA(Pro) in a two-step reaction: proline is first activated by ATP to form Pro-AMP and then transferred to the acceptor end of tRNA(Pro). As ProRS can inadvertently accommodate and process non-cognate amino acids such as alanine and cysteine, to avoid such errors it has two additional distinct editing activities against alanine. One activity is designated as 'pretransfer' editing and involves the tRNA(Pro)-independent hydrolysis of activated Ala-AMP. The other activity is designated 'posttransfer' editing and involves deacylation of mischarged Ala-tRNA(Pro). The misacylated Cys-tRNA(Pro) is not edited by ProRS. In Stutzerimonas stutzeri (strain A1501) (Pseudomonas stutzeri), this protein is Proline--tRNA ligase.